Reading from the N-terminus, the 62-residue chain is Small, acid-soluble spore protein H 1 (62 aa).

This sequence belongs to the SspH family.

The protein localises to the spore core. The protein is Small, acid-soluble spore protein H 1 of Clostridium botulinum (strain ATCC 19397 / Type A).